Reading from the N-terminus, the 377-residue chain is DNA replication and repair protein RecF (377 aa).

ATP is bound at residue 30–37 (GQNAQGKS).

The protein belongs to the RecF family.

It is found in the cytoplasm. In terms of biological role, the RecF protein is involved in DNA metabolism; it is required for DNA replication and normal SOS inducibility. RecF binds preferentially to single-stranded, linear DNA. It also seems to bind ATP. The sequence is that of DNA replication and repair protein RecF from Cyanothece sp. (strain PCC 7425 / ATCC 29141).